The sequence spans 303 residues: MSQIDKMAKIKKLREISDAPFVDCKKALENSDYDIDLAINWLNKNGKSKALKKSDRIAAEGLVLAKKDANSVLVFELNSETDFVAKNQNFINLQQKIGELLLASDFANLDDALLIQDEAGRSISELLILATATIGEKITLRRVFKTKYSLEQSVEVYTHSNGQIAVITILKGGNLEIAKNISMHVAALNPQYILKVEVPNEKLQEIQLEVEKKAFAEVKNFEKKPENVRVGILKGMIDKQLSEFVLELQPLATDSAVTVEKYLAQNSATLEKVVRFEVGEGIQKQNVDFSAEVNQQIQEFQKK.

The tract at residues 81-84 (TDFV) is involved in Mg(2+) ion dislocation from EF-Tu.

Belongs to the EF-Ts family.

It is found in the cytoplasm. Functionally, associates with the EF-Tu.GDP complex and induces the exchange of GDP to GTP. It remains bound to the aminoacyl-tRNA.EF-Tu.GTP complex up to the GTP hydrolysis stage on the ribosome. The sequence is that of Elongation factor Ts from Mesomycoplasma hyopneumoniae (strain 7448) (Mycoplasma hyopneumoniae).